The primary structure comprises 352 residues: Holliday junction branch migration complex subunit RuvB (352 aa).

The interval 13–201 is large ATPase domain (RuvB-L); that stretch reads FSLRKKELRL…FGISQKIEFY (189 aa). Residues Arg41, Gly82, Lys85, Thr86, Thr87, 148-150, Arg191, Tyr201, and Arg238 contribute to the ATP site; that span reads EDF. Residue Thr86 participates in Mg(2+) binding. The tract at residues 202 to 273 is small ATPAse domain (RuvB-S); that stretch reads TCDELKQIID…LIKKALNSYQ (72 aa). The segment at 276 to 352 is head domain (RuvB-H); that stretch reads EKGLDYVDRQ…KYIDSKNDNF (77 aa). Positions 330 and 335 each coordinate DNA.

Belongs to the RuvB family. In terms of assembly, homohexamer. Forms an RuvA(8)-RuvB(12)-Holliday junction (HJ) complex. HJ DNA is sandwiched between 2 RuvA tetramers; dsDNA enters through RuvA and exits via RuvB. An RuvB hexamer assembles on each DNA strand where it exits the tetramer. Each RuvB hexamer is contacted by two RuvA subunits (via domain III) on 2 adjacent RuvB subunits; this complex drives branch migration. In the full resolvosome a probable DNA-RuvA(4)-RuvB(12)-RuvC(2) complex forms which resolves the HJ.

The protein localises to the cytoplasm. The enzyme catalyses ATP + H2O = ADP + phosphate + H(+). Functionally, the RuvA-RuvB-RuvC complex processes Holliday junction (HJ) DNA during genetic recombination and DNA repair, while the RuvA-RuvB complex plays an important role in the rescue of blocked DNA replication forks via replication fork reversal (RFR). RuvA specifically binds to HJ cruciform DNA, conferring on it an open structure. The RuvB hexamer acts as an ATP-dependent pump, pulling dsDNA into and through the RuvAB complex. RuvB forms 2 homohexamers on either side of HJ DNA bound by 1 or 2 RuvA tetramers; 4 subunits per hexamer contact DNA at a time. Coordinated motions by a converter formed by DNA-disengaged RuvB subunits stimulates ATP hydrolysis and nucleotide exchange. Immobilization of the converter enables RuvB to convert the ATP-contained energy into a lever motion, pulling 2 nucleotides of DNA out of the RuvA tetramer per ATP hydrolyzed, thus driving DNA branch migration. The RuvB motors rotate together with the DNA substrate, which together with the progressing nucleotide cycle form the mechanistic basis for DNA recombination by continuous HJ branch migration. Branch migration allows RuvC to scan DNA until it finds its consensus sequence, where it cleaves and resolves cruciform DNA. The sequence is that of Holliday junction branch migration complex subunit RuvB from Prochlorococcus marinus (strain MIT 9312).